Here is a 64-residue protein sequence, read N- to C-terminus: Alpha-mammal toxin Lqq5 (64 aa).

Residues 2–64 (KDGYIVDDKN…VSIKEKGRCN (63 aa)) form the LCN-type CS-alpha/beta domain. Disulfide bonds link Cys12-Cys63, Cys16-Cys36, Cys22-Cys46, and Cys26-Cys48. Position 64 is an asparagine amide (Asn64).

The protein belongs to the long (4 C-C) scorpion toxin superfamily. Sodium channel inhibitor family. Alpha subfamily. In terms of tissue distribution, expressed by the venom gland.

Its subcellular location is the secreted. In terms of biological role, alpha toxins bind voltage-independently at site-3 of sodium channels (Nav) and inhibit the inactivation of the activated channels, thereby blocking neuronal transmission. Is active on mammals and bind with high affinity to rat brain synaptosome. Does not display phospholipid-binding activity. This Leiurus quinquestriatus quinquestriatus (Egyptian scorpion) protein is Alpha-mammal toxin Lqq5.